Here is a 695-residue protein sequence, read N- to C-terminus: Threonine--tRNA ligase (695 aa).

The region spanning 6–75 (SAIFVNTTDT…ETTATFTAVP (70 aa)) is the TGS domain. Positions 274–580 (DHRRLGTELD…LLEHYAGAFP (307 aa)) are catalytic. Residues C379, H430, and H557 each contribute to the Zn(2+) site.

The protein belongs to the class-II aminoacyl-tRNA synthetase family. As to quaternary structure, homodimer. Zn(2+) serves as cofactor.

The protein resides in the cytoplasm. The enzyme catalyses tRNA(Thr) + L-threonine + ATP = L-threonyl-tRNA(Thr) + AMP + diphosphate + H(+). In terms of biological role, catalyzes the attachment of threonine to tRNA(Thr) in a two-step reaction: L-threonine is first activated by ATP to form Thr-AMP and then transferred to the acceptor end of tRNA(Thr). Also edits incorrectly charged L-seryl-tRNA(Thr). The protein is Threonine--tRNA ligase of Corynebacterium glutamicum (strain ATCC 13032 / DSM 20300 / JCM 1318 / BCRC 11384 / CCUG 27702 / LMG 3730 / NBRC 12168 / NCIMB 10025 / NRRL B-2784 / 534).